The primary structure comprises 375 residues: tRNA-specific 2-thiouridylase MnmA (375 aa).

ATP contacts are provided by residues 12-19 (GMSGGVDS) and Met38. The interaction with target base in tRNA stretch occupies residues 98 to 100 (NPD). Catalysis depends on Cys103, which acts as the Nucleophile. Cys103 and Cys200 are disulfide-bonded. Gly127 lines the ATP pocket. The interaction with tRNA stretch occupies residues 150–152 (KDQ). The active-site Cysteine persulfide intermediate is the Cys200. Residues 312–313 (RY) are interaction with tRNA.

This sequence belongs to the MnmA/TRMU family.

It is found in the cytoplasm. It carries out the reaction S-sulfanyl-L-cysteinyl-[protein] + uridine(34) in tRNA + AH2 + ATP = 2-thiouridine(34) in tRNA + L-cysteinyl-[protein] + A + AMP + diphosphate + H(+). Catalyzes the 2-thiolation of uridine at the wobble position (U34) of tRNA, leading to the formation of s(2)U34. The chain is tRNA-specific 2-thiouridylase MnmA from Lactobacillus gasseri (strain ATCC 33323 / DSM 20243 / BCRC 14619 / CIP 102991 / JCM 1131 / KCTC 3163 / NCIMB 11718 / NCTC 13722 / AM63).